The primary structure comprises 118 residues: Large ribosomal subunit protein uL22c (118 aa).

It belongs to the universal ribosomal protein uL22 family. Part of the 50S ribosomal subunit.

Its subcellular location is the plastid. It localises to the chloroplast. In terms of biological role, this protein binds specifically to 23S rRNA. The globular domain of the protein is located near the polypeptide exit tunnel on the outside of the subunit, while an extended beta-hairpin is found that lines the wall of the exit tunnel in the center of the 70S ribosome. The polypeptide is Large ribosomal subunit protein uL22c (rpl22) (Rhodomonas salina (Cryptomonas salina)).